The following is a 220-amino-acid chain: Telomere repeats-binding bouquet formation protein 2 (220 aa).

The protein belongs to the TERB2 family. In terms of assembly, component of the MAJIN-TERB1-TERB2 complex, composed of MAJIN, TERB1 and TERB2.

Its subcellular location is the chromosome. It is found in the telomere. It localises to the nucleus inner membrane. In terms of biological role, meiosis-specific telomere-associated protein involved in meiotic telomere attachment to the nucleus inner membrane, a crucial step for homologous pairing and synapsis. Component of the MAJIN-TERB1-TERB2 complex, which promotes telomere cap exchange by mediating attachment of telomeric DNA to the inner nuclear membrane and replacement of the protective cap of telomeric chromosomes: in early meiosis, the MAJIN-TERB1-TERB2 complex associates with telomeric DNA and the shelterin/telosome complex. During prophase, the complex matures and promotes release of the shelterin/telosome complex from telomeric DNA. In Homo sapiens (Human), this protein is Telomere repeats-binding bouquet formation protein 2 (TERB2).